Here is a 648-residue protein sequence, read N- to C-terminus: Forkhead box protein N1 (648 aa).

Residues 1-105 (MVSLPPPQSD…SDKYPGFGFE (105 aa)) are disordered. The span at 58–67 (ERTPSLPPHS) shows a compositional bias: pro residues. The fork-head DNA-binding region spans 271 to 367 (KPIYSYSILI…EELQKWKRKD (97 aa)). Disordered regions lie at residues 392–445 (LGSP…LLMG), 458–508 (LSPG…LLAE), and 623–648 (LEPTPPTAPAGPSVYLSPSSKPVALA). Over residues 462–473 (LAPPGPPQPLFP) the composition is skewed to pro residues.

In terms of tissue distribution, expressed in thymus.

Its subcellular location is the nucleus. Transcriptional regulator which regulates the development, differentiation, and function of thymic epithelial cells (TECs) both in the prenatal and postnatal thymus. Acts as a master regulator of the TECs lineage development and is required from the onset of differentiation in progenitor TECs in the developing fetus to the final differentiation steps through which TECs mature to acquire their full functionality. Regulates, either directly or indirectly the expression of a variety of genes that mediate diverse aspects of thymus development and function, including MHC Class II, DLL4, CCL25, CTSL, CD40 and PAX1. Regulates the differentiation of the immature TECs into functional cortical TECs (cTECs) and medullary TECs (mTECs). Essential for maintenance of mTECs population in the postnatal thymus. Involved in the morphogenesis and maintenance of the three-dimensional thymic microstructure which is necessary for a fully functional thymus. Plays an important role in the maintenance of hematopoiesis and particularly T lineage progenitors within the bone marrow niche with age. Essential for the vascularization of the thymus anlage. Promotes the terminal differentiation of epithelial cells in the epidermis and hair follicles, partly by negatively regulating the activity of protein kinase C. Plays a crucial role in the early prenatal stages of T-cell ontogeny. The protein is Forkhead box protein N1 (FOXN1) of Homo sapiens (Human).